Here is a 505-residue protein sequence, read N- to C-terminus: Actin nucleation-promoting factor WASL (505 aa).

Residue Ser-2 is modified to N-acetylserine. The 108-residue stretch at 34–141 (LGKKCVTMSS…KAVTDLLGRR (108 aa)) folds into the WH1 domain. 2 disordered regions span residues 138-163 (LGRR…ATVD) and 184-205 (HTKE…DIGT). The segment covering 186–198 (KEKKKGKAKKKRL) has biased composition (basic residues). The region spanning 203–216 (IGTPSNFQHIGHVG) is the CRIB domain. Ser-242 bears the Phosphoserine; by TNK2 mark. Tyr-256 is subject to Phosphotyrosine; by FAK1 and TNK2. The segment at 266–406 (EAVKNELRRQ…HQVPTTAGNK (141 aa)) is disordered. Composition is skewed to pro residues over residues 276 to 364 (APPP…PPPS) and 371 to 391 (VAPP…PPGL). Arg-307 carries the post-translational modification Omega-N-methylarginine. WH2 domains follow at residues 405–422 (NKAA…LKKV) and 433–450 (GRDA…LKSV). Residues 476–505 (QKRSKAIHSSDEDEDEDDEEDFEDDDEWED) form a disordered region. Residues Ser-484 and Ser-485 each carry the phosphoserine modification. Residues 486–505 (DEDEDEDDEEDFEDDDEWED) show a composition bias toward acidic residues.

In terms of assembly, binds actin and the Arp2/3 complex. Interacts with CDC42. Interacts with FCHSD1. Interacts with FCHSD2. Binds to SH3 domains of GRB2. Interacts with the C-terminal SH3 domain of DNMBP. Interacts with SNX9. Interacts with the WW domains of PRPF40A/FBP11. Interacts with PTK2/FAK1. Interacts with PACSIN1, PACSIN2 and PACSIN3. Interacts with NOSTRIN. Binds to TNK2. Interacts with SNX33. Interacts with NONO (via second RRM domain); the interaction is direct. Component of a multiprotein complex with NONO and SFPQ; associates with the complex via direct interaction with NONO. As to quaternary structure, (Microbial infection) Interacts with E.coli effector protein EspF(U). Identified in a complex containing at least WASL, BAIAP2L1 and E.coli EspF(U). (Microbial infection) Interacts with Shigella flexneri protein IcsA. The interaction with IcsA enhances the affinity of WASL for Arp2/3, thus assembling a tight complex which has maximal activity in actin assembly. Post-translationally, phosphorylation at Ser-242, Tyr-256, Ser-484 and Ser-485 enhances actin polymerization activity.

The protein localises to the cytoplasm. The protein resides in the cytoskeleton. It is found in the nucleus. Functionally, regulates actin polymerization by stimulating the actin-nucleating activity of the Arp2/3 complex. Involved in various processes, such as mitosis and cytokinesis, via its role in the regulation of actin polymerization. Together with CDC42, involved in the extension and maintenance of the formation of thin, actin-rich surface projections called filopodia. In addition to its role in the cytoplasm, also plays a role in the nucleus by regulating gene transcription, probably by promoting nuclear actin polymerization. Binds to HSF1/HSTF1 and forms a complex on heat shock promoter elements (HSE) that negatively regulates HSP90 expression. Plays a role in dendrite spine morphogenesis. Decreasing levels of DNMBP (using antisense RNA) alters apical junction morphology in cultured enterocytes, junctions curve instead of being nearly linear. This is Actin nucleation-promoting factor WASL (WASL) from Homo sapiens (Human).